The chain runs to 266 residues: Large ribosomal subunit protein uL2m (266 aa).

This sequence belongs to the universal ribosomal protein uL2 family.

Its subcellular location is the mitochondrion. The sequence is that of Large ribosomal subunit protein uL2m (mrpl2) from Dictyostelium citrinum (Slime mold).